Here is a 454-residue protein sequence, read N- to C-terminus: Phosphoglucosamine mutase (454 aa).

The active-site Phosphoserine intermediate is the Ser104. Residues Ser104, Asp244, Asp246, and Asp248 each coordinate Mg(2+). Ser104 carries the phosphoserine modification.

Belongs to the phosphohexose mutase family. Mg(2+) serves as cofactor. In terms of processing, activated by phosphorylation.

The enzyme catalyses alpha-D-glucosamine 1-phosphate = D-glucosamine 6-phosphate. Functionally, catalyzes the conversion of glucosamine-6-phosphate to glucosamine-1-phosphate. This Lacticaseibacillus paracasei (strain ATCC 334 / BCRC 17002 / CCUG 31169 / CIP 107868 / KCTC 3260 / NRRL B-441) (Lactobacillus paracasei) protein is Phosphoglucosamine mutase.